An 86-amino-acid chain; its full sequence is Large ribosomal subunit protein bL31B (86 aa).

The protein belongs to the bacterial ribosomal protein bL31 family. Type B subfamily. As to quaternary structure, part of the 50S ribosomal subunit.

The polypeptide is Large ribosomal subunit protein bL31B (Vibrio campbellii (strain ATCC BAA-1116)).